Reading from the N-terminus, the 647-residue chain is Threonine--tRNA ligase (647 aa).

Positions 1-61 (MINITFPDGA…TEDGSIEIVT (61 aa)) constitute a TGS domain. The catalytic stretch occupies residues 242 to 540 (DHRKLGKELD…LIENYKGAFP (299 aa)). Cys-336, His-387, and His-517 together coordinate Zn(2+).

It belongs to the class-II aminoacyl-tRNA synthetase family. In terms of assembly, homodimer. Zn(2+) is required as a cofactor.

The protein localises to the cytoplasm. The enzyme catalyses tRNA(Thr) + L-threonine + ATP = L-threonyl-tRNA(Thr) + AMP + diphosphate + H(+). Catalyzes the attachment of threonine to tRNA(Thr) in a two-step reaction: L-threonine is first activated by ATP to form Thr-AMP and then transferred to the acceptor end of tRNA(Thr). Also edits incorrectly charged L-seryl-tRNA(Thr). This Streptococcus pneumoniae (strain P1031) protein is Threonine--tRNA ligase.